We begin with the raw amino-acid sequence, 470 residues long: 24-hydroxycholesterol 7-alpha-hydroxylase (470 aa).

The next 2 membrane-spanning stretches (helical) occupy residues 3 to 23 (IMEL…LFLF) and 270 to 290 (VVLW…LGYI). Position 415 (Cys415) interacts with heme.

It belongs to the cytochrome P450 family. Heme is required as a cofactor. As to expression, liver specific. Hepatic expression is sexually dimorphic (female &gt; male).

Its subcellular location is the endoplasmic reticulum membrane. The protein resides in the microsome membrane. It catalyses the reaction (24S)-hydroxycholesterol + reduced [NADPH--hemoprotein reductase] + O2 = (24S)-7alpha-dihydroxycholesterol + oxidized [NADPH--hemoprotein reductase] + H2O + H(+). It participates in steroid metabolism; cholesterol degradation. The protein operates within lipid metabolism; bile acid biosynthesis. In terms of biological role, a cytochrome P450 monooxygenase involved in neural cholesterol clearance through bile acid synthesis. Catalyzes 7-alpha hydroxylation of (24S)-hydroxycholesterol, a neural oxysterol that is metabolized to bile acids in the liver. Mechanistically, uses molecular oxygen inserting one oxygen atom into a substrate, and reducing the second into a water molecule, with two electrons provided by NADPH via cytochrome P450 reductase (CPR; NADPH-ferrihemoprotein reductase). This is 24-hydroxycholesterol 7-alpha-hydroxylase (Cyp39a1) from Mus musculus (Mouse).